A 335-amino-acid polypeptide reads, in one-letter code: Biotin synthase (335 aa).

The Radical SAM core domain maps to 46–274 (YKVQLASLFS…KSKIRLSAGR (229 aa)). Residues cysteine 61, cysteine 65, and cysteine 68 each contribute to the [4Fe-4S] cluster site. Residues cysteine 105, cysteine 137, cysteine 197, and arginine 269 each contribute to the [2Fe-2S] cluster site.

This sequence belongs to the radical SAM superfamily. Biotin synthase family. In terms of assembly, homodimer. Requires [4Fe-4S] cluster as cofactor. The cofactor is [2Fe-2S] cluster.

It catalyses the reaction (4R,5S)-dethiobiotin + (sulfur carrier)-SH + 2 reduced [2Fe-2S]-[ferredoxin] + 2 S-adenosyl-L-methionine = (sulfur carrier)-H + biotin + 2 5'-deoxyadenosine + 2 L-methionine + 2 oxidized [2Fe-2S]-[ferredoxin]. The protein operates within cofactor biosynthesis; biotin biosynthesis; biotin from 7,8-diaminononanoate: step 2/2. In terms of biological role, catalyzes the conversion of dethiobiotin (DTB) to biotin by the insertion of a sulfur atom into dethiobiotin via a radical-based mechanism. The sequence is that of Biotin synthase from Prochlorococcus marinus subsp. pastoris (strain CCMP1986 / NIES-2087 / MED4).